A 473-amino-acid polypeptide reads, in one-letter code: Transposase for insertion sequence element IS1151 (473 aa).

The protein belongs to the transposase 11 family.

Involved in the transposition of the insertion sequence. The chain is Transposase for insertion sequence element IS1151 (tnp) from Clostridium perfringens.